Reading from the N-terminus, the 182-residue chain is NADH-quinone oxidoreductase subunit I (182 aa).

4Fe-4S ferredoxin-type domains lie at 50–82 and 92–121; these read IILS…LQKA and EFFR…MTPD. [4Fe-4S] cluster-binding residues include Cys-62, Cys-65, Cys-68, Cys-72, Cys-101, Cys-104, Cys-107, and Cys-111.

The protein belongs to the complex I 23 kDa subunit family. In terms of assembly, NDH-1 is composed of 14 different subunits. Subunits NuoA, H, J, K, L, M, N constitute the membrane sector of the complex. The cofactor is [4Fe-4S] cluster.

The protein localises to the cell inner membrane. The enzyme catalyses a quinone + NADH + 5 H(+)(in) = a quinol + NAD(+) + 4 H(+)(out). In terms of biological role, NDH-1 shuttles electrons from NADH, via FMN and iron-sulfur (Fe-S) centers, to quinones in the respiratory chain. The immediate electron acceptor for the enzyme in this species is believed to be ubiquinone. Couples the redox reaction to proton translocation (for every two electrons transferred, four hydrogen ions are translocated across the cytoplasmic membrane), and thus conserves the redox energy in a proton gradient. The protein is NADH-quinone oxidoreductase subunit I of Psychrobacter arcticus (strain DSM 17307 / VKM B-2377 / 273-4).